A 580-amino-acid chain; its full sequence is MSRQSSVSFRSGGSRSFSAASAITPSVSRTSFSSVSRSGGGGGGRISLGGACGAGGYGSRSLYNVGGSKRISYSSGGGSFRNQFGAGGFGFGGGAGSGFGFGGGAGSGFGFGGGAGFGGGYGGAGFPVCPPGGIQEVTVNQNLLTPLNLQIDPTIQRVRTEEREQIKTLNNKFASFIDKVRFLEQQNKVLDTKWALLQEQGTKTIKQNLDPLFEQYINNLRRQLDGVLGERGRLDSELRNMQDLVEDYKNKYEDEINKRTTAENEFVMLKKDVDAAYMNKVELEARVDALMDEINFMKMFFDAELSQMQTHVSDTSVVLSMDNNRSLDLDSIIAEVKAQYEDIANRSRTEAESWYQTKYEELQQTAGRHGDDLRNTKHEISEMNRMIQRLRSEIDNVKKQCANLQNAIAEAEQRGELALKDARNKLTELEEALQKAKQDMARLLREYQELMNTKLALDVEIATYRKLLEGEECRLSGEGVGPVNISVVTNSVSSGYGGGSSIGVGSGFGGGLGSGFAGGLGPRFTRGGGGLGLGSGLSVGGSGFSAGSSQGGMSFGSGGGSGSSVKFVSTTSSSRRSFKS.

The tract at residues 1–161 (MSRQSSVSFR…DPTIQRVRTE (161 aa)) is head. 4 positions are modified to phosphoserine: S5, S8, S16, and S21. T24 is subject to Phosphothreonine; by CDK1. A phosphoserine mark is found at S26, S36, S47, S61, S68, S72, S75, and S79. T145 carries the phosphothreonine; by CDK1 modification. Residue T160 is modified to Phosphothreonine; by AURKB. Positions 162–197 (EREQIKTLNNKFASFIDKVRFLEQQNKVLDTKWALL) are coil 1A. Residues 162 to 475 (EREQIKTLNN…KLLEGEECRL (314 aa)) enclose the IF rod domain. The interval 198-216 (QEQGTKTIKQNLDPLFEQY) is linker 1. A coil 1B region spans residues 217–309 (INNLRRQLDG…FFDAELSQMQ (93 aa)). The linker 12 stretch occupies residues 310 to 332 (THVSDTSVVLSMDNNRSLDLDSI). The tract at residues 333–471 (IAEVKAQYED…ATYRKLLEGE (139 aa)) is coil 2. Positions 472-580 (ECRLSGEGVG…TSSSRRSFKS (109 aa)) are tail. R526 bears the Omega-N-methylarginine mark. The segment at 555-580 (FGSGGGSGSSVKFVSTTSSSRRSFKS) is disordered. Low complexity predominate over residues 563–580 (SSVKFVSTTSSSRRSFKS).

This sequence belongs to the intermediate filament family. As to quaternary structure, heterodimer of a type I and a type II keratin. Heterodimer with type I keratin KRT25 leading to the formation of keratin intermediate filament (KIF) network. Forms a heterodimer (via 2B domains) with KRT14 (via 2B domains). Interacts with PLEC isoform 1C, when in a heterodimer with KRT14. Interacts with TCHP. Interacts with EPPK1. Interacts with AMELX. Interacts with PKP1 (via N-terminus) and PKP2. In terms of processing, phosphorylated by CDK1, AURKB and Rho-kinase, phosphorylation is regulated by the cell cycle. Thr-24 phosphorylation, mediated by CDK1, peaks during prometaphase or metaphase cells with phosphorylated filamentous structures evident throughout the cytoplasm during early mitosis. CDK1 phosphorylates Thr-24 in mitotic cells at the site of injury. Post-translationally, O-glycosylated. Expressed in the corneal epithelium (at protein level). Expressed in the epidermis of the ear (at protein level). Expressed in the basal and spinous layers of the skin at birth (at protein level).

Its subcellular location is the cytoplasm. In terms of biological role, required for the formation of keratin intermediate filaments in the basal epidermis and maintenance of the skin barrier in response to mechanical stress. Regulates the recruitment of Langerhans cells to the epidermis, potentially by modulation of the abundance of macrophage chemotactic cytokines, macrophage inflammatory cytokines and CTNND1 localization in keratinocytes. This Mus musculus (Mouse) protein is Keratin, type II cytoskeletal 5.